Consider the following 330-residue polypeptide: Probable cytosolic iron-sulfur protein assembly protein ciao1-A (330 aa).

WD repeat units lie at residues 14–53, 59–98, 103–142, 148–187, 192–231, 243–282, and 294–330; these read HPDS…WECK, GHQR…FECL, GHEN…EYEC, SHTQ…WECR, GHTS…GGQD, FHGR…DPDQ, and AHSQ…QSEV.

This sequence belongs to the WD repeat CIA1 family. Component of the CIA complex.

In terms of biological role, key component of the cytosolic iron-sulfur protein assembly (CIA) complex, a multiprotein complex that mediates the incorporation of iron-sulfur cluster into extramitochondrial Fe/S proteins. The polypeptide is Probable cytosolic iron-sulfur protein assembly protein ciao1-A (ciao1a) (Salmo salar (Atlantic salmon)).